A 36-amino-acid chain; its full sequence is Potassium channel toxin alpha-KTx 16.9 (36 aa).

Disulfide bonds link Cys-7–Cys-28, Cys-13–Cys-33, and Cys-17–Cys-35.

This sequence belongs to the short scorpion toxin superfamily. Potassium channel inhibitor family. Alpha-KTx 16 subfamily. In terms of tissue distribution, expressed by the venom gland.

It is found in the secreted. Its function is as follows. Poorly competes with (125)I-kaliotoxin binding on rat brain synaptosome (IC(50)&gt;100 nM). Is a poor Kv1.3/KCNA3 ligand. May have as real target KCa1.1/KCNMA1 channel. Shows weak toxicity on mice. In Buthus paris (Scorpion), this protein is Potassium channel toxin alpha-KTx 16.9.